A 269-amino-acid chain; its full sequence is Hydroxyethylthiazole kinase (269 aa).

Methionine 42 is a binding site for substrate. ATP is bound by residues arginine 118 and serine 164. Glycine 191 is a substrate binding site.

The protein belongs to the Thz kinase family. Requires Mg(2+) as cofactor.

The catalysed reaction is 5-(2-hydroxyethyl)-4-methylthiazole + ATP = 4-methyl-5-(2-phosphooxyethyl)-thiazole + ADP + H(+). It participates in cofactor biosynthesis; thiamine diphosphate biosynthesis; 4-methyl-5-(2-phosphoethyl)-thiazole from 5-(2-hydroxyethyl)-4-methylthiazole: step 1/1. Its function is as follows. Catalyzes the phosphorylation of the hydroxyl group of 4-methyl-5-beta-hydroxyethylthiazole (THZ). The protein is Hydroxyethylthiazole kinase of Listeria welshimeri serovar 6b (strain ATCC 35897 / DSM 20650 / CCUG 15529 / CIP 8149 / NCTC 11857 / SLCC 5334 / V8).